The primary structure comprises 561 residues: Putative cysteine ligase BshC (561 aa).

Residues Leu-472–Leu-517 are a coiled coil.

The protein belongs to the BshC family.

In Chloroherpeton thalassium (strain ATCC 35110 / GB-78), this protein is Putative cysteine ligase BshC.